Consider the following 778-residue polypeptide: IQ domain-containing protein E (778 aa).

Disordered stretches follow at residues Met-1–Arg-71 and Ser-83–Ser-108. The span at Lys-37 to Ser-49 shows a compositional bias: low complexity. Polar residues predominate over residues Ser-83 to His-101. Residues Leu-157 to Pro-323 are a coiled coil. Ser-322 carries the post-translational modification Phosphoserine. Disordered regions lie at residues Lys-348–Pro-392, Glu-443–Glu-462, Glu-474–Arg-529, and Leu-573–Asn-612. Positions Ser-352–Glu-362 are enriched in low complexity. Residues Glu-398–Ala-486 adopt a coiled-coil conformation. IQ domains follow at residues Leu-553–Arg-582 and Gln-615–Ala-644. Over residues Ser-581–Pro-598 the composition is skewed to low complexity. Positions Thr-651–Pro-662 are enriched in polar residues. The segment at Thr-651–Phe-778 is disordered. The residue at position 661 (Ser-661) is a Phosphoserine. Over residues Ile-672–Ser-686 the composition is skewed to basic and acidic residues. Positions Pro-739–Val-752 are enriched in pro residues.

Component of the EvC complex composed of EFCAB7, IQCE, EVC2 and EVC; built from two subcomplexes, EVC2:EVC and EFCAB7:IQCE. Interacts (via N-terminus) with EFCAB7 (via EF-hands 1 and 2); this interaction anchors the EVC-EVC2 complex in a signaling microdomain at the base of cilia and stimulates the Hedgehog (Hh) pathway. Interacts with EVC2 (via N-terminal end). Interacts with EVC.

It is found in the cell projection. The protein localises to the cilium membrane. Functionally, component of the EvC complex that positively regulates ciliary Hedgehog (Hh) signaling. Required for proper limb morphogenesis. This is IQ domain-containing protein E (Iqce) from Mus musculus (Mouse).